The chain runs to 914 residues: TRPM8 channel-associated factor 3 (914 aa).

In terms of domain architecture, Peptidase M60 spans 533-832; the sequence is NSWVSTGLYL…TYLQLQEGFG (300 aa).

This sequence belongs to the TCAF family. In terms of tissue distribution, prostate-specific. Present in both dorso-lateral and anterior prostate.

In terms of biological role, may play a role in the regulation of the cation channel TRPM8 activity. The sequence is that of TRPM8 channel-associated factor 3 from Mus musculus (Mouse).